A 505-amino-acid polypeptide reads, in one-letter code: Histidine--tRNA ligase, mitochondrial (505 aa).

A mitochondrion-targeting transit peptide spans 1–31 (MPHLGPLRRRAWAALLGQLLRPPSTVCTRGC). The residue at position 66 (S66) is a Phosphoserine. Residues 130 to 132 (DLT), R157, Q173, D177, R326, and 330 to 331 (YY) each bind L-histidine. An N6-acetyllysine modification is found at K443.

The protein belongs to the class-II aminoacyl-tRNA synthetase family. As to quaternary structure, homodimer.

The protein localises to the mitochondrion. The catalysed reaction is tRNA(His) + L-histidine + ATP = L-histidyl-tRNA(His) + AMP + diphosphate + H(+). Functionally, mitochondrial aminoacyl-tRNA synthetase that catalyzes the ATP-dependent ligation of histidine to the 3'-end of its cognate tRNA, via the formation of an aminoacyl-adenylate intermediate (His-AMP). The sequence is that of Histidine--tRNA ligase, mitochondrial (Hars2) from Mus musculus (Mouse).